A 226-amino-acid polypeptide reads, in one-letter code: ATP synthase F(0) complex subunit a (226 aa).

6 helical membrane-spanning segments follow: residues 9–29 (FITP…FPAM), 68–88 (WALM…LGLV), 97–117 (QLSM…ITGF), 138–158 (IPML…ALAI), 164–184 (ITAG…LTSI), and 201–223 (ILEF…LYLH).

The protein belongs to the ATPase A chain family. As to quaternary structure, component of the ATP synthase complex composed at least of ATP5F1A/subunit alpha, ATP5F1B/subunit beta, ATP5MC1/subunit c (homooctomer), MT-ATP6/subunit a, MT-ATP8/subunit 8, ATP5ME/subunit e, ATP5MF/subunit f, ATP5MG/subunit g, ATP5MK/subunit k, ATP5MJ/subunit j, ATP5F1C/subunit gamma, ATP5F1D/subunit delta, ATP5F1E/subunit epsilon, ATP5PF/subunit F6, ATP5PB/subunit b, ATP5PD/subunit d, ATP5PO/subunit OSCP. ATP synthase complex consists of a soluble F(1) head domain (subunits alpha(3) and beta(3)) - the catalytic core - and a membrane F(0) domain - the membrane proton channel (subunits c, a, 8, e, f, g, k and j). These two domains are linked by a central stalk (subunits gamma, delta, and epsilon) rotating inside the F1 region and a stationary peripheral stalk (subunits F6, b, d, and OSCP). Interacts with DNAJC30; interaction is direct.

It localises to the mitochondrion inner membrane. It carries out the reaction H(+)(in) = H(+)(out). In terms of biological role, subunit a, of the mitochondrial membrane ATP synthase complex (F(1)F(0) ATP synthase or Complex V) that produces ATP from ADP in the presence of a proton gradient across the membrane which is generated by electron transport complexes of the respiratory chain. ATP synthase complex consist of a soluble F(1) head domain - the catalytic core - and a membrane F(1) domain - the membrane proton channel. These two domains are linked by a central stalk rotating inside the F(1) region and a stationary peripheral stalk. During catalysis, ATP synthesis in the catalytic domain of F(1) is coupled via a rotary mechanism of the central stalk subunits to proton translocation. With the subunit c (ATP5MC1), forms the proton-conducting channel in the F(0) domain, that contains two crucial half-channels (inlet and outlet) that facilitate proton movement from the mitochondrial intermembrane space (IMS) into the matrix. Protons are taken up via the inlet half-channel and released through the outlet half-channel, following a Grotthuss mechanism. The sequence is that of ATP synthase F(0) complex subunit a from Dugong dugon (Dugong).